The chain runs to 424 residues: MRIAMISMHTSPLEQAGTGDAGGMNVYIRNTAEQLAKLGLSVDIFTRATRPLQGEVVELGDGVRVINCVAGPYEGLSKEELPTQLAAFTGSVLAFTRQHGLSYDLIHSHYWLSGQVAWLLRDLWNIRWVHTPHTLAAVKNNYLSEGDHREPESRRICEQQIVDNADVLIVNTDAEVADVEEGYDSHKARIAVVTPGADIEKFTPGTERATENARRALGIPLSAKVIGFVGRLQRLKGPHVLLQAAATLIERYPDMPIRVLICGGPSGSGLERPKCLEELAEELGISRAVRFLKPRPPEELVSIYQAADVVAMPSANESFGLVALEAQATGTPVVATRIGGLQAAVAEGKSGLLVDGQDPQAWADALGQLLSDDDQRIAMAEYAPQHAARYSWENTAKQLVELYRSLPTMPEEGPAERHPAGSAN.

Residues H9, 20 to 25 (DAGGMN), K78, Y110, T134, and R154 contribute to the 1D-myo-inositol 3-phosphate site. UDP-N-acetyl-alpha-D-glucosamine is bound at residue G23. Residues R231, K236, and R295 each coordinate UDP-N-acetyl-alpha-D-glucosamine. Residues Y304, Q305, and A307 each coordinate Mg(2+). Positions 317 and 325 each coordinate UDP-N-acetyl-alpha-D-glucosamine. T331 is a Mg(2+) binding site.

Belongs to the glycosyltransferase group 1 family. MshA subfamily. As to quaternary structure, homodimer.

It catalyses the reaction 1D-myo-inositol 3-phosphate + UDP-N-acetyl-alpha-D-glucosamine = 1D-myo-inositol 2-acetamido-2-deoxy-alpha-D-glucopyranoside 3-phosphate + UDP + H(+). Functionally, catalyzes the transfer of a N-acetyl-glucosamine moiety to 1D-myo-inositol 3-phosphate to produce 1D-myo-inositol 2-acetamido-2-deoxy-glucopyranoside 3-phosphate in the mycothiol biosynthesis pathway. This is D-inositol 3-phosphate glycosyltransferase from Corynebacterium urealyticum (strain ATCC 43042 / DSM 7109).